Consider the following 656-residue polypeptide: DNA ligase (656 aa).

NAD(+) is bound by residues 32-36 and 81-82; these read DAVYD and SL. The active-site N6-AMP-lysine intermediate is the K112. 3 residues coordinate NAD(+): R133, E167, and K306. C400, C403, C416, and C421 together coordinate Zn(2+). Positions 577 to 656 constitute a BRCT domain; sequence KSSSVFSDKT…ELLKRLKELD (80 aa).

It belongs to the NAD-dependent DNA ligase family. LigA subfamily. Requires Mg(2+) as cofactor. Mn(2+) serves as cofactor.

The catalysed reaction is NAD(+) + (deoxyribonucleotide)n-3'-hydroxyl + 5'-phospho-(deoxyribonucleotide)m = (deoxyribonucleotide)n+m + AMP + beta-nicotinamide D-nucleotide.. Its function is as follows. DNA ligase that catalyzes the formation of phosphodiester linkages between 5'-phosphoryl and 3'-hydroxyl groups in double-stranded DNA using NAD as a coenzyme and as the energy source for the reaction. It is essential for DNA replication and repair of damaged DNA. This Helicobacter pylori (strain J99 / ATCC 700824) (Campylobacter pylori J99) protein is DNA ligase.